Reading from the N-terminus, the 372-residue chain is MTALKHTPLNAAHRALNARMVDFGGWDMPVNYGSQIEEHEAVRTDAGMFDVSHMCVVDFTGSRARAFFEYAIANNVGKLKTPGKALYSCLLNPQGGVIDDLIVYYFTEDFFRVVVNAGTADKDIAWFNQLNEQGGYGLTIAPRRDFAIVAVQGPNAREKVWATVPAARAATSELKPFNAAQVAGTPFGDLTVARTGYTGEDGFEVIVPAVHVEALWNALQQHGVRPCGLGARDTLRLEAGMNLYGQDMDDTVSPLDAGLAWTVDLSTPRAFVGREALERDGTRAAFVGLILQKENGKAGGVLRAHQKVVTPHGEGEITSGTFSPSMQESIAFARVPTAVQVGDTVHVQIRDKQLPARVVKLPFVRNGKVLAA.

The protein belongs to the GcvT family. In terms of assembly, the glycine cleavage system is composed of four proteins: P, T, L and H.

It catalyses the reaction N(6)-[(R)-S(8)-aminomethyldihydrolipoyl]-L-lysyl-[protein] + (6S)-5,6,7,8-tetrahydrofolate = N(6)-[(R)-dihydrolipoyl]-L-lysyl-[protein] + (6R)-5,10-methylene-5,6,7,8-tetrahydrofolate + NH4(+). Its function is as follows. The glycine cleavage system catalyzes the degradation of glycine. The sequence is that of Aminomethyltransferase from Burkholderia multivorans (strain ATCC 17616 / 249).